Consider the following 509-residue polypeptide: Cytochrome P450 monooxygenase ARMGADRAFT_974139 (509 aa).

Residues 4–24 form a helical membrane-spanning segment; the sequence is ASLAVVVWAILLVLWLRRIFG. Asn96 and Asn279 each carry an N-linked (GlcNAc...) asparagine glycan. Cys439 contacts heme.

Belongs to the cytochrome P450 family. It depends on heme as a cofactor.

The protein localises to the membrane. Its pathway is secondary metabolite biosynthesis. Functionally, cytochrome P450 monooxygenase, part of the gene cluster that mediates the biosynthesis of melleolides, a range of antifungal and phytotoxic polyketide derivatives composed of an orsellinic acid (OA) moiety esterified to various sesquiterpene alcohols. The first step in melleolides biosynthesis is performed by the delta(6)-protoilludene synthase PRO1 which catalyzes the cyclization of farnesyl diphosphate to protoilludene. The orsellinic acid synthase armB produces OA by condensing acetyl-CoA with 3 malonyl-CoA units in a three-round chain elongation reaction folowed by a C2-C7 ring closure. ArmB further catalyzes the trans-esterification of OA to the various sesquiterpene alcohols resulting from the hydroxylation of protoilludene. The melleolides cluster also includes 5 cytochrome P450 monooxygenases, 4 NAD(+)-dependent oxidoreductases, one flavin-dependent oxidoreductase, and one O-methyltransferase. The cytochrome P450 monooxygenases may be involved in protoilludene hydroxylation to elaborate melleolides with multiple alcohol groups, such as melleolide D, which carries alcohol functionalities at C-4, C-5, C-10, and C-13. The role of the NAD(+)-dependent enzymes remains unknown. Numerous melleolides, including arnamial, show 5'-O-methylation of the aromatic moiety which may be catalyzed by the methyltransferase encoded in the cluster. The flavin-dependent oxidoreductase might represent the dehydrogenase yielding the aldehyde in position 1 of arnamial and other melleolides. Finally, several halogenase localized outside of the cluster, are able to catalyze the transfer of a single chlorine atom to the melleolide backbone, resulting in a 6'-chloromelleolide product. The polypeptide is Cytochrome P450 monooxygenase ARMGADRAFT_974139 (Armillaria gallica (Bulbous honey fungus)).